Reading from the N-terminus, the 496-residue chain is Signal recognition particle subunit SRP54 1 (496 aa).

Residues 1–296 (MVLAQLGGSI…DVKPFVSRLL (296 aa)) are G-domain. GTP-binding positions include 108–115 (GLQGSGKT), 191–195 (DTSGR), and 249–252 (TKMD). Positions 297–496 (GMGDLSGLVN…MGMFGGGGGE (200 aa)) are M-domain.

This sequence belongs to the GTP-binding SRP family. SRP54 subfamily. Component of a signal recognition particle (SRP) complex that consists of a 7SL RNA molecule of 300 nucleotides and six protein subunits: SRP72, SRP68, SRP54, SRP19, SRP14 and SRP9.

It localises to the cytoplasm. It is found in the endoplasmic reticulum. It catalyses the reaction GTP + H2O = GDP + phosphate + H(+). Component of the signal recognition particle (SRP) complex, a ribonucleoprotein complex that mediates the cotranslational targeting of secretory and membrane proteins to the endoplasmic reticulum (ER). As part of the SRP complex, associates with the SRP receptor (SR) component SRPRA to target secretory proteins to the endoplasmic reticulum membrane. Binds to the signal sequence of presecretory proteins when they emerge from the ribosomes. Displays basal GTPase activity, and stimulates reciprocal GTPase activation of the SR subunit SRPRA. Forms a guanosine 5'-triphosphate (GTP)-dependent complex with the SR subunit SRPRA. SR compaction and GTPase mediated rearrangement of SR drive SRP-mediated cotranslational protein translocation into the ER. Requires the presence of SRP9/SRP14 and/or SRP19 to stably interact with RNA. The sequence is that of Signal recognition particle subunit SRP54 1 from Solanum lycopersicum (Tomato).